A 23-amino-acid polypeptide reads, in one-letter code: Thymidine phosphorylase (23 aa).

This sequence belongs to the thymidine/pyrimidine-nucleoside phosphorylase family. In terms of assembly, homodimer.

The enzyme catalyses thymidine + phosphate = 2-deoxy-alpha-D-ribose 1-phosphate + thymine. The enzymes which catalyze the reversible phosphorolysis of pyrimidine nucleosides are involved in the degradation of these compounds and in their utilization as carbon and energy sources, or in the rescue of pyrimidine bases for nucleotide synthesis. This Lacticaseibacillus rhamnosus (Lactobacillus rhamnosus) protein is Thymidine phosphorylase (deoA).